A 193-amino-acid chain; its full sequence is AP-3 complex subunit sigma-1 (193 aa).

A Phosphoserine modification is found at serine 191.

It belongs to the adaptor complexes small subunit family. Adaptor protein complex 3 (AP-3) is a heterotetramer composed of two large adaptins (delta-type subunit AP3D1 and beta-type subunit AP3B1 or AP3B2), a medium adaptin (mu-type subunit AP3M1 or AP3M2) and a small adaptin (sigma-type subunit APS1 or AP3S2). Interacts with AGAP1. AP-3 associates with the BLOC-1 complex.

It is found in the golgi apparatus. The protein localises to the cytoplasmic vesicle membrane. Part of the AP-3 complex, an adaptor-related complex which is not clathrin-associated. The complex is associated with the Golgi region as well as more peripheral structures. It facilitates the budding of vesicles from the Golgi membrane and may be directly involved in trafficking to lysosomes. In concert with the BLOC-1 complex, AP-3 is required to target cargos into vesicles assembled at cell bodies for delivery into neurites and nerve terminals. In Bos taurus (Bovine), this protein is AP-3 complex subunit sigma-1 (AP3S1).